A 225-amino-acid chain; its full sequence is UPF0758 protein Ping_0056 (225 aa).

The MPN domain occupies 103-225 (ALTSAAQTKA…CTSFAENGWI (123 aa)). H174, H176, and D187 together coordinate Zn(2+). A JAMM motif motif is present at residues 174–187 (HNHPSGDPSASEAD).

The protein belongs to the UPF0758 family.

This Psychromonas ingrahamii (strain DSM 17664 / CCUG 51855 / 37) protein is UPF0758 protein Ping_0056.